The sequence spans 357 residues: D-amino-acid oxidase (357 aa).

The FAD site is built by alanine 13, glycine 14, serine 42, glycine 47, arginine 289, glycine 315, and glycine 318. Arginine 289 contacts D-proline. D-serine is bound at residue arginine 289.

Belongs to the DAMOX/DASOX family. The cofactor is FAD.

The protein resides in the cytoplasm. It is found in the secreted. It localises to the cell wall. The catalysed reaction is a D-alpha-amino acid + O2 + H2O = a 2-oxocarboxylate + H2O2 + NH4(+). It carries out the reaction D-phenylalanine + O2 + H2O = 3-phenylpyruvate + H2O2 + NH4(+). It catalyses the reaction D-lysine + O2 + H2O = 6-amino-2-oxohexanoate + H2O2 + NH4(+). The enzyme catalyses D-methionine + O2 + H2O = 4-methylsulfanyl-2-oxobutanoate + H2O2 + NH4(+). The catalysed reaction is D-arginine + O2 + H2O = 5-guanidino-2-oxopentanoate + H2O2 + NH4(+). It carries out the reaction D-ornithine + O2 + H2O = 5-amino-2-oxopentanoate + H2O2 + NH4(+). It catalyses the reaction D-leucine + O2 + H2O = 4-methyl-2-oxopentanoate + H2O2 + NH4(+). The enzyme catalyses D-histidine + O2 + H2O = 3-(imidazol-5-yl)pyruvate + H2O2 + NH4(+). Activated by manganese, copper, and iron ions. Inhibited by barium, aluminum, and zinc ions. Catalyzes the oxidative deamination of D-amino acids with broad substrate specificity. The polypeptide is D-amino-acid oxidase (Unknown prokaryotic organism).